Consider the following 470-residue polypeptide: Glutamate--tRNA ligase (470 aa).

The 'HIGH' region motif lies at 15–25 (PSPTGFLHIGG). The 'KMSKS' region signature appears at 240 to 244 (KLSKR). An ATP-binding site is contributed by lysine 243.

This sequence belongs to the class-I aminoacyl-tRNA synthetase family. Glutamate--tRNA ligase type 1 subfamily. In terms of assembly, monomer.

The protein resides in the cytoplasm. The enzyme catalyses tRNA(Glu) + L-glutamate + ATP = L-glutamyl-tRNA(Glu) + AMP + diphosphate. Its function is as follows. Catalyzes the attachment of glutamate to tRNA(Glu) in a two-step reaction: glutamate is first activated by ATP to form Glu-AMP and then transferred to the acceptor end of tRNA(Glu). This Caulobacter vibrioides (strain ATCC 19089 / CIP 103742 / CB 15) (Caulobacter crescentus) protein is Glutamate--tRNA ligase.